Reading from the N-terminus, the 418-residue chain is NADH-quinone oxidoreductase subunit D (418 aa).

The protein belongs to the complex I 49 kDa subunit family. In terms of assembly, NDH-1 is composed of 14 different subunits. Subunits NuoB, C, D, E, F, and G constitute the peripheral sector of the complex.

It is found in the cell inner membrane. It carries out the reaction a quinone + NADH + 5 H(+)(in) = a quinol + NAD(+) + 4 H(+)(out). NDH-1 shuttles electrons from NADH, via FMN and iron-sulfur (Fe-S) centers, to quinones in the respiratory chain. The immediate electron acceptor for the enzyme in this species is believed to be ubiquinone. Couples the redox reaction to proton translocation (for every two electrons transferred, four hydrogen ions are translocated across the cytoplasmic membrane), and thus conserves the redox energy in a proton gradient. This Neisseria meningitidis serogroup C / serotype 2a (strain ATCC 700532 / DSM 15464 / FAM18) protein is NADH-quinone oxidoreductase subunit D.